Here is a 2338-residue protein sequence, read N- to C-terminus: Proto-oncogene tyrosine-protein kinase ROS (2338 aa).

The first 27 residues, 1–27 (MKRIRWLTPKPATFVVLGCVWISVAQG), serve as a signal peptide directing secretion. Residues 28 to 1853 (TILSSCLTSC…EDGFWITETS (1826 aa)) lie on the Extracellular side of the membrane. N52 and N77 each carry an N-linked (GlcNAc...) asparagine glycan. Fibronectin type-III domains lie at 110–205 (LPTA…VPET) and 206–294 (APFI…PSPA). N-linked (GlcNAc...) asparagine glycans are attached at residues N333, N361, N480, N623, N934, and N1010. Residues 566 to 666 (LPGHPQEVSV…EPSVGTTLVP (101 aa)) form the Fibronectin type-III 3 domain. Fibronectin type-III domains follow at residues 942-1037 (IPDS…SVPS) and 1038-1145 (APEN…TSEI). A glycan (N-linked (GlcNAc...) asparagine) is linked at N1298. Fibronectin type-III domains are found at residues 1440–1548 (VASN…TKSG), 1549–1648 (VPGA…VNMF), 1650–1743 (TPEK…TKAG), and 1744–1845 (VPSK…LVED). N1675 carries an N-linked (GlcNAc...) asparagine glycan. A helical membrane pass occupies residues 1854-1874 (FILTIIVGIFLVATVPLTFVW). At 1875–2338 (HRSLKNHKAT…AHSGHGDVSE (464 aa)) the chain is on the cytoplasmic side. Residues 1937 to 2210 (LSLRLLLGSG…YNIQDQLQLF (274 aa)) enclose the Protein kinase domain. ATP-binding positions include 1943-1951 (LGSGAFGEV) and K1972. Residue D2071 is the Proton acceptor of the active site. Phosphotyrosine; by autocatalysis is present on Y2266. Positions 2277–2314 (EDRYEGPLGSKESGLHDLKKDERQPADKDFCQQPQVAY) are disordered. Residues 2289–2306 (SGLHDLKKDERQPADKDF) show a composition bias toward basic and acidic residues. Phosphotyrosine; by autocatalysis is present on Y2325.

Belongs to the protein kinase superfamily. Tyr protein kinase family. Insulin receptor subfamily. In terms of assembly, interacts with PTPN11; may activate the PI3 kinase-mTOR signaling pathway. Interacts with VAV3; constitutive interaction mediating VAV3 phosphorylation. Interacts with PTPN6 (via SH2 1 domain); the interaction is direct and promotes ROS1 dephosphorylation. Post-translationally, phosphorylated. Probably autophosphorylates. Phosphorylation at Tyr-2266 is required for the interaction with PTPN6 that mediates ROS1 dephosphorylation. Phosphorylation at Tyr-2266 stimulates the kinase activity and the activation of the ERK1 signaling cascade. Phosphorylation at Tyr-2266 and/or Tyr-2325 recruits PTPN11. Expressed in heart, lung, kidney and testis.

Its subcellular location is the cell membrane. The enzyme catalyses L-tyrosyl-[protein] + ATP = O-phospho-L-tyrosyl-[protein] + ADP + H(+). Its activity is regulated as follows. Inhibited by dephosphorylation by PTPN6. Orphan receptor tyrosine kinase (RTK) that plays a role in epithelial cell differentiation and regionalization of the proximal epididymal epithelium. NELL2 is an endogenous ligand for ROS1. Upon endogenous stimulation by NELL2, ROS1 activates the intracellular signaling pathway and triggers epididymal epithelial differentiation and subsequent sperm maturation. May activate several downstream signaling pathways related to cell differentiation, proliferation, growth and survival including the PI3 kinase-mTOR signaling pathway. Mediates the phosphorylation of PTPN11, an activator of this pathway. May also phosphorylate and activate the transcription factor STAT3 to control anchorage-independent cell growth. Mediates the phosphorylation and the activation of VAV3, a guanine nucleotide exchange factor regulating cell morphology. May activate other downstream signaling proteins including AKT1, MAPK1, MAPK3, IRS1 and PLCG2. The sequence is that of Proto-oncogene tyrosine-protein kinase ROS (Ros1) from Rattus norvegicus (Rat).